Reading from the N-terminus, the 285-residue chain is Pantothenate synthetase (285 aa).

ATP is bound at residue 30-37 (MGFLHEGH). His-37 serves as the catalytic Proton donor. Gln-61 lines the (R)-pantoate pocket. Gln-61 lines the beta-alanine pocket. ATP is bound at residue 147–150 (GQKD). Residue Gln-153 coordinates (R)-pantoate. ATP contacts are provided by residues Val-176 and 184 to 187 (KSSR).

This sequence belongs to the pantothenate synthetase family. In terms of assembly, homodimer.

It localises to the cytoplasm. The catalysed reaction is (R)-pantoate + beta-alanine + ATP = (R)-pantothenate + AMP + diphosphate + H(+). The protein operates within cofactor biosynthesis; (R)-pantothenate biosynthesis; (R)-pantothenate from (R)-pantoate and beta-alanine: step 1/1. Catalyzes the condensation of pantoate with beta-alanine in an ATP-dependent reaction via a pantoyl-adenylate intermediate. This is Pantothenate synthetase from Listeria monocytogenes serovar 1/2a (strain ATCC BAA-679 / EGD-e).